The following is a 308-amino-acid chain: 2-dehydro-3-deoxy-phosphogluconate/2-dehydro-3-deoxy-6-phosphogalactonate aldolase (308 aa).

Residues 57 to 58 (TT), 144 to 146 (YNY), and 169 to 171 (KDT) each bind substrate. Lys-169 (schiff-base intermediate with substrate) is an active-site residue.

The protein belongs to the DapA family. KDPG aldolase subfamily. Homotetramer; dimer of dimers.

The enzyme catalyses 2-dehydro-3-deoxy-6-phospho-D-gluconate = D-glyceraldehyde 3-phosphate + pyruvate. The catalysed reaction is 2-dehydro-3-deoxy-6-phospho-D-galactonate = D-glyceraldehyde 3-phosphate + pyruvate. It participates in carbohydrate acid metabolism; 2-dehydro-3-deoxy-D-gluconate degradation; D-glyceraldehyde 3-phosphate and pyruvate from 2-dehydro-3-deoxy-D-gluconate: step 2/2. Functionally, involved in the degradation of glucose and galactose via the Entner-Doudoroff pathway. Catalyzes the reversible cleavage of 2-keto-3-deoxy-6-phosphogluconate (KDPG) and 2-keto-3-deoxygluconate (KDG) forming pyruvate and glyceraldehyde 3-phosphate or glyceraldehyde, respectively. It is also able to catalyze the reversible cleavage of 2-keto-3-deoxy-6-phosphogalactonate (KDPGal) and 2-keto-3-deoxygalactonate (KDGal). This is 2-dehydro-3-deoxy-phosphogluconate/2-dehydro-3-deoxy-6-phosphogalactonate aldolase (eda) from Saccharolobus solfataricus (strain ATCC 35092 / DSM 1617 / JCM 11322 / P2) (Sulfolobus solfataricus).